A 156-amino-acid chain; its full sequence is uncharacterized protein (156 aa).

Residues methionine 1–glycine 27 form the signal peptide. N-linked (GlcNAc...) asparagine glycans are attached at residues asparagine 20, asparagine 83, asparagine 103, asparagine 106, and asparagine 134.

Its subcellular location is the secreted. This is an uncharacterized protein from Dictyostelium discoideum (Social amoeba).